The chain runs to 484 residues: 60S ribosome subunit biogenesis protein NOP8 (484 aa).

Residues 7-83 (KRIFVGNIFH…NILKVDEAKP (77 aa)) form the RRM domain. Phosphoserine occurs at positions 234, 239, and 268. Residues 260–330 (DKPMTLNDSD…EGDGQEDNEF (71 aa)) form a disordered region. A compositionally biased stretch (acidic residues) spans 320–329 (DEGDGQEDNE). Ser-370 carries the post-translational modification Phosphoserine.

Interacts with NIP7 and RRP43. Together with DBP6, URB1, URB2 and RSA3, forms an RNA-independent complex, which is required during early maturation of nascent 60S ribosomal subunits.

The protein localises to the nucleus. It is found in the nucleolus. Functionally, required for 60S ribosomal subunit synthesis. May be involved in assembly reactions occurring within late pre-ribosomal particles. In Saccharomyces cerevisiae (strain ATCC 204508 / S288c) (Baker's yeast), this protein is 60S ribosome subunit biogenesis protein NOP8 (NOP8).